Consider the following 442-residue polypeptide: Zuotin (442 aa).

The interval 49 to 84 (RQRHGRTFSEDERLEVKNKVQEEVKEESEDEEEDPA) is disordered. A Phosphothreonine modification is found at Thr-55. Residues 55–71 (TFSEDERLEVKNKVQEE) are compositionally biased toward basic and acidic residues. Residues Ser-57 and Ser-76 each carry the phosphoserine modification. Residues 72–83 (VKEESEDEEEDP) show a composition bias toward acidic residues. Positions 97 to 167 (DHYAVLGLSK…VRRRQFDSVD (71 aa)) constitute a J domain. Disordered stretches follow at residues 242-270 (DGES…DNAR) and 306-331 (GARE…EAAA). Positions 316–330 (KKKEEEERRAAEEAA) are enriched in basic and acidic residues.

As to quaternary structure, RAC is a heterodimer of the Hsp70/DnaK-type chaperone ssz1 and the Hsp40/DnaJ-type chaperone zuo1. RAC associates with ribosomes via zuo1.

The protein localises to the cytoplasm. Functionally, component of the ribosome-associated complex (RAC), a heterodimeric chaperone complex involved in regulation of accurate translation termination and in folding or maintaining nascent polypeptides in a folding-competent state. RAC stimulates the ATPase activity of the ribosome-associated pool of Hsp70-type chaperones SSB1/SSB2 that bind to the nascent polypeptide chain. In Schizosaccharomyces pombe (strain 972 / ATCC 24843) (Fission yeast), this protein is Zuotin (zuo1).